Consider the following 223-residue polypeptide: Deoxyribose-phosphate aldolase 1 (223 aa).

Residue Asp91 is the Proton donor/acceptor of the active site. Lys153 functions as the Schiff-base intermediate with acetaldehyde in the catalytic mechanism. The active-site Proton donor/acceptor is Lys182.

This sequence belongs to the DeoC/FbaB aldolase family. DeoC type 1 subfamily.

It is found in the cytoplasm. The catalysed reaction is 2-deoxy-D-ribose 5-phosphate = D-glyceraldehyde 3-phosphate + acetaldehyde. It functions in the pathway carbohydrate degradation; 2-deoxy-D-ribose 1-phosphate degradation; D-glyceraldehyde 3-phosphate and acetaldehyde from 2-deoxy-alpha-D-ribose 1-phosphate: step 2/2. Functionally, catalyzes a reversible aldol reaction between acetaldehyde and D-glyceraldehyde 3-phosphate to generate 2-deoxy-D-ribose 5-phosphate. The sequence is that of Deoxyribose-phosphate aldolase 1 from Yersinia pestis.